Here is a 361-residue protein sequence, read N- to C-terminus: Peptide chain release factor 1 (361 aa).

At Gln236 the chain carries N5-methylglutamine. Basic and acidic residues predominate over residues 285 to 309 (TAKDSARAADRKAQVGSGDRSERIR). A disordered region spans residues 285 to 311 (TAKDSARAADRKAQVGSGDRSERIRTY).

It belongs to the prokaryotic/mitochondrial release factor family. In terms of processing, methylated by PrmC. Methylation increases the termination efficiency of RF1.

Its subcellular location is the cytoplasm. Functionally, peptide chain release factor 1 directs the termination of translation in response to the peptide chain termination codons UAG and UAA. In Methylorubrum extorquens (strain CM4 / NCIMB 13688) (Methylobacterium extorquens), this protein is Peptide chain release factor 1.